A 476-amino-acid chain; its full sequence is tRNA(Ile)-lysidine synthase (476 aa).

Residue 25–30 (SGGPDS) coordinates ATP.

It belongs to the tRNA(Ile)-lysidine synthase family.

It localises to the cytoplasm. The catalysed reaction is cytidine(34) in tRNA(Ile2) + L-lysine + ATP = lysidine(34) in tRNA(Ile2) + AMP + diphosphate + H(+). Ligates lysine onto the cytidine present at position 34 of the AUA codon-specific tRNA(Ile) that contains the anticodon CAU, in an ATP-dependent manner. Cytidine is converted to lysidine, thus changing the amino acid specificity of the tRNA from methionine to isoleucine. In Bacillus licheniformis (strain ATCC 14580 / DSM 13 / JCM 2505 / CCUG 7422 / NBRC 12200 / NCIMB 9375 / NCTC 10341 / NRRL NRS-1264 / Gibson 46), this protein is tRNA(Ile)-lysidine synthase.